A 526-amino-acid polypeptide reads, in one-letter code: Choline/ethanolamine transporter FLVCR2 (526 aa).

The segment at 1–70 (MVNEGPNQEE…PSGLAHPSSS (70 aa)) is disordered. At 1–76 (MVNEGPNQEE…PSSSGPEDLS (76 aa)) the chain is on the cytoplasmic side. 1 to 84 (MVNEGPNQEE…LSVIKVSRRR (84 aa)) lines the heme b pocket. 5 repeat units span residues 25 to 30 (PSVSVH), 31 to 36 (PSVSVH), 37 to 42 (PSVSIN), 43 to 48 (PSVSVH), and 49 to 54 (PSSSAH). Residues 25-56 (PSVSVHPSVSVHPSVSINPSVSVHPSSSAHPS) show a composition bias toward low complexity. The segment at 25 to 72 (PSVSVHPSVSVHPSVSINPSVSVHPSSSAHPSALAQPSGLAHPSSSGP) is 8 X 6 AA tandem repeats of P-S-[VS]-S-[VIAG]-[HNP]. A 6; approximate repeat occupies 55–60 (PSALAQ). Residues 61–66 (PSGLAH) form a 7; approximate repeat. The stretch at 67 to 72 (PSSSGP) is repeat 8. A helical membrane pass occupies residues 77–101 (VIKVSRRRWAVVLVFSCYSMCNSFQ). N98 and W102 together coordinate choline. Over 102–119 (WIQYGSINNIFMHFYGVS) the chain is Extracellular. The chain crosses the membrane as a helical span at residues 120–147 (AFAIDWLSMCYMLTYIPLLLPVAWLLEK). Residues 148 to 149 (FG) lie on the Cytoplasmic side of the membrane. A helical membrane pass occupies residues 150–169 (LRTIALTGSALNCLGAWVKL). The Extracellular segment spans residues 170–176 (GSLKPHL). Residues 177–205 (FPVTVVGQLICSVAQVFILGMPSRIASVW) form a helical membrane-spanning segment. Choline is bound by residues Q191 and L195. At 206–210 (FGANE) the chain is on the cytoplasmic side. The helical transmembrane segment at 211-236 (VSTACSVAVFGNQLGIAIGFLVPPVL) threads the bilayer. At 237-241 (VPNIE) the chain is on the extracellular side. A helical membrane pass occupies residues 242-271 (DRDELAYHISIMFYIIGGVATLLLILVIIV). Residues 272–307 (FKEKPKYPPSRAQSLSYALTSPDASYLGSIARLFKN) lie on the Cytoplasmic side of the membrane. The helical transmembrane segment at 308 to 338 (LNFVLLVITYGLNAGAFYALSTLLNRMVIWH) threads the bilayer. Y325 is a choline binding site. At 339–342 (YPGE) the chain is on the extracellular side. The helical transmembrane segment at 343-371 (EVNAGRIGLTIVIAGMLGAVISGIWLDRS) threads the bilayer. Residues 372–373 (KT) are Cytoplasmic-facing. Residues 374–396 (YKETTLVVYIMTLVGMVVYTFTL) traverse the membrane as a helical segment. At 397 to 399 (NLG) the chain is on the extracellular side. Residues 400–429 (HLWVVFITAGTMGFFMTGYLPLGFEFAVEL) form a helical membrane-spanning segment. The Cytoplasmic segment spans residues 430–437 (TYPESEGI). The chain crosses the membrane as a helical span at residues 438 to 463 (SSGLLNISAQVFGIIFTISQGQIIDN). Q447 lines the choline pocket. At 464–465 (YG) the chain is on the extracellular side. Residues 466-488 (TKPGNIFLCVFLTLGAALTAFIK) form a helical membrane-spanning segment. Over 489–526 (ADLRRQKANKETLENKLQEEEEESNTSKVPTAVSEDHL) the chain is Cytoplasmic. The interval 500-526 (TLENKLQEEEEESNTSKVPTAVSEDHL) is disordered. S515 is subject to Phosphoserine.

Belongs to the major facilitator superfamily. Feline leukemia virus subgroup C receptor (TC 2.A.1.28.1) family. Interacts with components of electron transfer chain complexes III, IV and V including CYC1, NDUFA4, COX4I1, ATP5PD and ATP5F1C; these interactions occur in the absence of heme and are disrupted upon heme binding. Interacts with ATP2A2; this interaction occurs in the absence of heme and promotes ATP2A2 proteasomal degradation; the complex is dissociated upon heme binding. Interacts with HMOX1; this interaction is potentiated in the presence of heme. As to expression, expressed in non-hematopoietic tissues, with relative abundant expression in brain, placenta, lung, liver and kidney. Also expressed in hematopoietic tissues (fetal liver, spleen, lymph node, thymus, leukocytes and bone marrow). Found in acidophil cells of the pituitary that secrete growth hormone and prolactin (at protein level).

Its subcellular location is the cell membrane. It is found in the mitochondrion membrane. It localises to the endoplasmic reticulum membrane. It carries out the reaction choline(out) = choline(in). It catalyses the reaction ethanolamine(in) = ethanolamine(out). The catalysed reaction is heme b(in) = heme b(out). Its function is as follows. Choline uniporter that specifically mediates choline uptake at the blood-brain-barrier. Responsible for the majority of choline uptake across the blood-brain-barrier from the circulation into the brain. Choline, a nutrient critical for brain development, is a precursor of phosphatidylcholine, as well as betaine. Also mediates transport of ethanolamine. Choline and ethanolamine transport is not coupled with proton transport and is exclusively driven by the choline gradient across the plasma membrane. However, the presence of an inwardly directed proton gradient enhances choline uptake. Also acts as a heme b transporter. Required to regulate mitochondrial respiration processes, ATP synthesis and thermogenesis. At low heme levels, interacts with components of electron transfer chain (ETC) complexes and ATP2A2, leading to ubiquitin-mediated degradation of ATP2A2 and inhibition of thermogenesis. Upon heme binding, dissociates from ETC complexes to allow switching from mitochondrial ATP synthesis to thermogenesis. The protein is Choline/ethanolamine transporter FLVCR2 of Homo sapiens (Human).